A 405-amino-acid polypeptide reads, in one-letter code: Probable succinyl-diaminopimelate desuccinylase (405 aa).

His-72 serves as a coordination point for Zn(2+). Asp-74 is an active-site residue. Position 105 (Asp-105) interacts with Zn(2+). The active-site Proton acceptor is Glu-139. Positions 140, 165, and 377 each coordinate Zn(2+).

This sequence belongs to the peptidase M20A family. Zn(2+) serves as cofactor. It depends on Co(2+) as a cofactor.

The catalysed reaction is N-succinyl-(2S,6S)-2,6-diaminopimelate + H2O = (2S,6S)-2,6-diaminopimelate + succinate. It functions in the pathway amino-acid biosynthesis; L-lysine biosynthesis via DAP pathway; LL-2,6-diaminopimelate from (S)-tetrahydrodipicolinate (succinylase route): step 3/3. This is Probable succinyl-diaminopimelate desuccinylase (dapE) from Staphylococcus epidermidis (strain ATCC 12228 / FDA PCI 1200).